Consider the following 223-residue polypeptide: Ribonuclease T (223 aa).

Positions 20–194 (VVIDVETAGF…YDTERTAELF (175 aa)) constitute an Exonuclease domain. 4 residues coordinate Mg(2+): Asp23, Glu25, His181, and Asp186. The active-site Proton donor/acceptor is the His181.

Belongs to the RNase T family. As to quaternary structure, homodimer. Mg(2+) is required as a cofactor.

Its function is as follows. Trims short 3' overhangs of a variety of RNA species, leaving a one or two nucleotide 3' overhang. Responsible for the end-turnover of tRNA: specifically removes the terminal AMP residue from uncharged tRNA (tRNA-C-C-A). Also appears to be involved in tRNA biosynthesis. This is Ribonuclease T from Shewanella sp. (strain W3-18-1).